We begin with the raw amino-acid sequence, 416 residues long: cAMP-dependent protein kinase regulatory subunit (416 aa).

The interval 2–183 (VSSLPKESQA…RLEKSIRNNF (182 aa)) is dimerization and phosphorylation. 11 positions are modified to phosphoserine: serine 3, serine 4, serine 9, serine 68, serine 70, serine 74, serine 77, serine 79, serine 81, serine 83, and serine 84. Residues 8–45 (ESQAELQLFQNEINAANPSDFLQFSANYFNKRLEQQRA) are dimerization/docking domain (D/D). The tract at residues 65 to 138 (PEESFSRPQS…TSTPPLPMHF (74 aa)) is disordered. Residues 70-84 (SRPQSAQSQSRSRSS) are compositionally biased toward low complexity. Threonine 129 bears the Phosphothreonine mark. A Phosphoserine modification is found at serine 130. Threonine 131 and threonine 144 each carry phosphothreonine. An Inhibitor sequence (IS) motif is present at residues 142-146 (RRTSV). A Phosphoserine; by autocatalysis modification is found at serine 145. At serine 147 the chain carries Phosphoserine. A phosphothreonine mark is found at threonine 150 and threonine 160. 3',5'-cyclic AMP contacts are provided by residues 184–301 (LFNK…KSMP), glutamate 249, arginine 258, 302–416 (VLKS…PTRH), glutamate 368, and arginine 377.

This sequence belongs to the cAMP-dependent kinase regulatory chain family. In terms of assembly, the inactive holoenzyme of cAMP-dependent protein kinase is a tetramer, composed of 2 regulatory subunits (R, encoded by BCY1) and two catalytic subunits (C, encoded by the 3 partially redundant TPK1, TPK2, and TPK3 genes). Activation by cAMP causes dissociation of the holoenzyme, producing 2 active catalytic monomers C and a regulatory dimer R(2). In terms of processing, phosphorylated by YAK1 in response to glucose starvation. Phosphorylated by MCK1 at Thr-129 upon TOR complex 1 (TORC1) inhibition. Thr-129 phosphorylation activates BCY1 to inhibit PKA. TORC1 inhibits phosphorylation of RxxS/T sites but has no effect on Ser-145 phosphorylation. The phosphorylation sites can be clustered in several groups, all localized in the N-terminal part. The first cluster termed cluster I (CI) is located close to the N-terminus and includes Ser-3, Ser-4 and Ser-9. The second includes Ser-68, Ser-70, Ser-74, Ser-77, Ser-79, Ser-81, Ser-83, and Ser-84. This cluster of phosphorylation sites, termed cluster II (CII), is important for BCY1 cytoplasmic localization and function. The third cluster of phosphorylated residues consists of Thr-144, Ser-145, Ser-147, Thr-150, and Thr-160. This cluster falls within or near the so-called autoinhibitory domain where the catalytic subunit of PKA autophosphorylates the highly conserved Ser-145 to inhibit BCY1. A last cluster of phosphorylated residues included Thr-129, Ser-130, and Thr-131 and is termed cluster III (CIII). Sites in CIII (and to a lesser extent in CII) are hyperphosphorylated in response to rapamycin.

It localises to the cytoplasm. It is found in the nucleus. Regulatory subunit of the cyclic AMP-dependent protein kinase (PKA), an effector of the Ras/cAMP pathway. Inhibits PKA activity in the absence of cAMP. cAMP activates PKA and promotes growth and proliferation in response to good nutrient conditions. Together with ZDS1, provides a negative feedback control on the cell wall integrity-signaling pathway by acting as a negative regulator of MAP kinase SLT2/MPK1. In Saccharomyces cerevisiae (strain ATCC 204508 / S288c) (Baker's yeast), this protein is cAMP-dependent protein kinase regulatory subunit (BCY1).